We begin with the raw amino-acid sequence, 599 residues long: MGRLEVLFLGLTCCLAAACAAKLGAVYTEGGFVEGVNKKLSLLGGDSVDIFKGIPFATAKTLENPQRHPGWQGTLKATNFKKRCLQATITQDNTYGQEDCLYLNIWVPQGRKQVSHNLPVMVWIYGGAFLMGSGQGANFLKNYLYDGEEIATRGNVIVVTFNYRVGPLGFLSTGDANLPGNFGLRDQHMAIAWVKRNIAAFGGDPDNITIFGESAGAASVSLQTLSPYNKGLIRRAISQSGMALSPWAIQKNPLFWAKTIAKKVGCPTEDTGKMAACLKITDPRALTLAYKLPVKKQEYPVVHYLAFIPVIDGDFIPDDPINLYNNTADIDYIAGINNMDGHLFATIDVPAVDKTKQTVTEEDFYRLVSGHTVAKGLKGAQATFDIYTESWAQDPSQENMKKTVVAFETDVLFLIPTEIALAQHKAHAKSAKTYSYLFSHPSRMPIYPKWMGADHADDLQYVFGKPFATPLGYRPQDRAVSKAMIAYWTNFARSGDPNMGNSPVPTHWYPYTLENGNYLDITKTITSASMKEHLREKFLKFWAVTFEVLPTVTGDQDTLTPPEDDSEVAPDPPSDDSQVVPVPPTDDSVEAQMPATIGF.

The N-terminal stretch at 1–20 (MGRLEVLFLGLTCCLAAACA) is a signal peptide. A disulfide bridge connects residues Cys-84 and Cys-100. N-linked (GlcNAc...) asparagine glycosylation is present at Asn-207. The Acyl-ester intermediate role is filled by Ser-214. A disulfide bridge links Cys-266 with Cys-277. Asn-325 is a glycosylation site (N-linked (GlcNAc...) asparagine). Active-site charge relay system residues include Asp-340 and His-455. The disordered stretch occupies residues 553 to 599 (TGDQDTLTPPEDDSEVAPDPPSDDSQVVPVPPTDDSVEAQMPATIGF). Tandem repeats lie at residues 559-569 (LTPPEDDSEVA), 570-580 (PDPPSDDSQVV), and 581-588 (PVPPTDDS). Residues 559-588 (LTPPEDDSEVAPDPPSDDSQVVPVPPTDDS) are 4 X 11 AA tandem repeats, O-glycosylated region.

Belongs to the type-B carboxylesterase/lipase family. In terms of assembly, interacts with CLC. In terms of tissue distribution, EXpressed by eosinophils.

The protein localises to the secreted. It catalyses the reaction a triacylglycerol + H2O = a diacylglycerol + a fatty acid + H(+). It carries out the reaction 1,2,3-tri-(9Z-octadecenoyl)-glycerol + H2O = di-(9Z)-octadecenoylglycerol + (9Z)-octadecenoate + H(+). The catalysed reaction is 1,2,3-trioctanoylglycerol + H2O = dioctanoylglycerol + octanoate + H(+). The enzyme catalyses a sterol ester + H2O = a sterol + a fatty acid + H(+). It catalyses the reaction an acetyl ester + H2O = an aliphatic alcohol + acetate + H(+). It carries out the reaction a butanoate ester + H2O = an aliphatic alcohol + butanoate + H(+). The catalysed reaction is 9-hexadecanoyloxy-octadecanoate + H2O = 9-hydroxy-octadecanoate + hexadecanoate + H(+). The enzyme catalyses 9-(9Z-octadecenoyloxy)-octadecanoate + H2O = 9-hydroxy-octadecanoate + (9Z)-octadecenoate + H(+). It catalyses the reaction cholesteryl (9Z-octadecenoate) + H2O = cholesterol + (9Z)-octadecenoate + H(+). It carries out the reaction 1-hexadecanoyl-sn-glycero-3-phosphocholine + H2O = sn-glycerol 3-phosphocholine + hexadecanoate + H(+). The catalysed reaction is 12-hexadecanoyloxy-octadecanoate + H2O = 12-hydroxyoctadecanoate + hexadecanoate + H(+). The enzyme catalyses 12-(9Z-octadecenoyloxy)-octadecanoate + H2O = 12-hydroxyoctadecanoate + (9Z)-octadecenoate + H(+). It catalyses the reaction 13-(9Z-octadecenoyloxy)-octadecanoate + H2O = 13-hydroxy-octadecanoate + (9Z)-octadecenoate + H(+). It carries out the reaction 9-(9Z-hexadecenoyloxy)-octadecanoate + H2O = (9Z)-hexadecenoate + 9-hydroxy-octadecanoate + H(+). The catalysed reaction is 12-(9Z-hexadecenoyloxy)-octadecanoate + H2O = 12-hydroxyoctadecanoate + (9Z)-hexadecenoate + H(+). The enzyme catalyses 13-(9Z-hexadecenoyloxy)-octadecanoate + H2O = 13-hydroxy-octadecanoate + (9Z)-hexadecenoate + H(+). It catalyses the reaction 12-octadecanoyloxy-octadecanoate + H2O = 12-hydroxyoctadecanoate + octadecanoate + H(+). It carries out the reaction 13-octadecanoyloxy-octadecanoate + H2O = 13-hydroxy-octadecanoate + octadecanoate + H(+). The catalysed reaction is 5-(9Z-hexadecenoyloxy)-octadecanoate + H2O = 5-hydroxy-octadecanoate + (9Z)-hexadecenoate + H(+). The enzyme catalyses 9-octadecanoyloxy-octadecanoate + H2O = 9-hydroxy-octadecanoate + octadecanoate + H(+). Activated by bile salts such as sodium taurocholate. In terms of biological role, catalyzes the hydrolysis of a wide range of substrates including cholesteryl esters, phospholipids, lysophospholipids, di- and tri-acylglycerols, and fatty acid esters of hydroxy fatty acids (FAHFAs). Preferentially hydrolyzes FAHFAs with the ester bond further away from the carboxylate. Unsaturated FAHFAs are hydrolyzed more quickly than saturated FAHFAs. Has an essential role in the complete digestion of dietary lipids and their intestinal absorption, along with the absorption of fat-soluble vitamins. The protein is Bile salt-activated lipase (Cel) of Mus musculus (Mouse).